The sequence spans 87 residues: Phosphoribosyl-ATP pyrophosphatase (87 aa).

Belongs to the PRA-PH family.

The protein resides in the cytoplasm. It catalyses the reaction 1-(5-phospho-beta-D-ribosyl)-ATP + H2O = 1-(5-phospho-beta-D-ribosyl)-5'-AMP + diphosphate + H(+). The protein operates within amino-acid biosynthesis; L-histidine biosynthesis; L-histidine from 5-phospho-alpha-D-ribose 1-diphosphate: step 2/9. This chain is Phosphoribosyl-ATP pyrophosphatase, found in Salinibacter ruber (strain DSM 13855 / M31).